A 619-amino-acid chain; its full sequence is MALLQIAEPGQSSAPHQHRIAIGIDLGTTHSLVATVLSGKPKVLNDVQNRRLLPSIVHYGDNTTHYGEEAKPFIIADPKNTIVSVKRFMGRSKADIKFQHPYELVGSENEMPAFETRAGRKTPVEISAEILKQLKDRAEDSLQNPVNGAVITVPAYFDEAQRQATRDAAQLAGLNVLRLLNEPTAAAVAYGLDQESNLATDRNYVIYDLGGGTFDVSILRFSQGVFEVLATGGHTALGGDDLDRLIVKWAKKQLNIDVLSDEDYAVFIVAARQAKEQLSTQDSVELKLLEATLTLDRPTFESIIQVALDKTISVCKRVLRDAKLELTDIQNVVLVGGSTRSYAVQKAVREVFAQEPLCTINPDEVVAIGASITANQLIGNSQDGSLLLDVTPLSLGLETMGGLVERLISRNTAIPVARRQEFTTYQDGQTAMLIHVVQGERDLVEHCRSLGRFVLHGIPPMTAGQARIEVTFQVDADGLLTVSAREATSGVQAHIDIKPSYGLSEADTERLLIEGFQHAEEDKNLRHLKETKVEAERELEALEQALKVDADLLDEKQLDALNSAKESLKAQLEGSDIQAIEHAVQQLKVHSDAFAALRMNRHIDHALKGTKLDDWSKSN.

This sequence belongs to the heat shock protein 70 family.

In terms of biological role, chaperone involved in the maturation of iron-sulfur cluster-containing proteins. Has a low intrinsic ATPase activity which is markedly stimulated by HscB. In Acinetobacter baumannii (strain ACICU), this protein is Chaperone protein HscA homolog.